We begin with the raw amino-acid sequence, 412 residues long: Fringe glycosyltransferase (412 aa).

Topologically, residues 1 to 15 are cytoplasmic; it reads MMSLTVLSPPQRFKR. A helical; Signal-anchor for type II membrane protein membrane pass occupies residues 16–34; it reads ILQAMMLAVAVVYMTLLLY. At 35–412 the chain is on the lumenal side; sequence QSAYGYPGIQ…FPYFSFCPPR (378 aa). Arginine 164 contacts substrate. Cystine bridges form between cysteine 204–cysteine 215 and cysteine 233–cysteine 297. Aspartate 237 contributes to the substrate binding site. Mn(2+) is bound at residue aspartate 238. The active site involves aspartate 327. Histidine 351 is a binding site for Mn(2+). Cysteines 400 and 409 form a disulfide.

The protein belongs to the glycosyltransferase 31 family. Requires Mn(2+) as cofactor. In terms of tissue distribution, expressed in dorsal cells.

Its subcellular location is the golgi apparatus membrane. The catalysed reaction is 3-O-(alpha-L-fucosyl)-L-threonyl-[EGF-like domain protein] + UDP-N-acetyl-alpha-D-glucosamine = 3-O-(N-acetyl-beta-D-glucosaminyl-(1-&gt;3)-alpha-L-fucosyl)-L-threonyl-[EGF-like domain protein] + UDP + H(+). It carries out the reaction 3-O-(alpha-L-fucosyl)-L-seryl-[EGF-like domain protein] + UDP-N-acetyl-alpha-D-glucosamine = 3-O-(N-acetyl-beta-D-glucosaminyl-(1-&gt;3)-alpha-L-fucosyl)-L-seryl-[EGF-like domain protein] + UDP + H(+). Functionally, glycosyltransferase involved in the elongation of O-linked ligands to activate Notch signaling. Possesses fucose-specific beta-1,3-N-acetylglucosaminyltransferase activity; extends the O-linked fucose on the Notch EGF repeats. Boundary-specific cell-signaling molecule that is responsible for dorsal-ventral cell interactions during wing development. The protein is Fringe glycosyltransferase (fng) of Drosophila melanogaster (Fruit fly).